A 155-amino-acid polypeptide reads, in one-letter code: Small ribosomal subunit protein bS16 (155 aa).

Residues 113-155 are disordered; that stretch reads ADGAPTGEAIQQKKKKAPKKAEAAEAEAPAEEPAAESADAASE. The segment covering 136–146 has biased composition (acidic residues); that stretch reads AEAEAPAEEPA.

Belongs to the bacterial ribosomal protein bS16 family.

The sequence is that of Small ribosomal subunit protein bS16 from Mycobacteroides abscessus (strain ATCC 19977 / DSM 44196 / CCUG 20993 / CIP 104536 / JCM 13569 / NCTC 13031 / TMC 1543 / L948) (Mycobacterium abscessus).